A 283-amino-acid polypeptide reads, in one-letter code: 4-diphosphocytidyl-2-C-methyl-D-erythritol kinase (283 aa).

Residue K13 is part of the active site. An ATP-binding site is contributed by 96 to 106 (PMGGGIGGGSS). D138 is a catalytic residue.

The protein belongs to the GHMP kinase family. IspE subfamily.

The catalysed reaction is 4-CDP-2-C-methyl-D-erythritol + ATP = 4-CDP-2-C-methyl-D-erythritol 2-phosphate + ADP + H(+). It participates in isoprenoid biosynthesis; isopentenyl diphosphate biosynthesis via DXP pathway; isopentenyl diphosphate from 1-deoxy-D-xylulose 5-phosphate: step 3/6. Functionally, catalyzes the phosphorylation of the position 2 hydroxy group of 4-diphosphocytidyl-2C-methyl-D-erythritol. In Pseudomonas fluorescens (strain Pf0-1), this protein is 4-diphosphocytidyl-2-C-methyl-D-erythritol kinase.